Here is a 1012-residue protein sequence, read N- to C-terminus: RNA-binding protein 26 (1012 aa).

A Glycyl lysine isopeptide (Lys-Gly) (interchain with G-Cter in SUMO2) cross-link involves residue Lys-94. Residues 98–127 (LQHQEKDIKKEELTKEEEREKKFSRRLNHS) adopt a coiled-coil conformation. Lys-106 is covalently cross-linked (Glycyl lysine isopeptide (Lys-Gly) (interchain with G-Cter in SUMO1); alternate). A Glycyl lysine isopeptide (Lys-Gly) (interchain with G-Cter in SUMO2); alternate cross-link involves residue Lys-106. Over residues 106–118 (KKEELTKEEEREK) the composition is skewed to basic and acidic residues. The interval 106–236 (KKEELTKEEE…PLENNYTPVS (131 aa)) is disordered. At Ser-127 the chain carries Phosphoserine. Residues 134–168 (RYRDNRSRDERKKDDRSRKRDYDRNPPRRDSYRDR) are compositionally biased toward basic and acidic residues. Basic residues predominate over residues 169 to 186 (YNRRRGRSRSYSRSRSRS). 2 stretches are compositionally biased toward basic and acidic residues: residues 187–201 (WSKE…DRSR) and 209–227 (RSRE…RTDP). The segment at 288–316 (PMPKKRCRDYDEKGFCMRGDMCPFDHGSD) adopts a C3H1-type zinc-finger fold. The segment covering 334–388 (QPPVVEGPPPPGLPPPPPILTPPPVNLRPPVPPPGPLPPSLPPVTGPPPPLPPLQ) has biased composition (pro residues). Disordered stretches follow at residues 334-404 (QPPV…SSVP) and 465-520 (IGLT…NFNR). The segment covering 394–404 (APPNSATSSVP) has biased composition (low complexity). Ser-501 carries the post-translational modification Phosphoserine. At Lys-515 the chain carries N6-acetyllysine. The residue at position 523 (Ser-523) is a Phosphoserine. The RRM 1 domain occupies 537–611 (TKLELRKVPP…RFIKVYWHRE (75 aa)). The residue at position 621 (Ser-621) is a Phosphoserine. Residues 647-667 (PVPSATTEPAEAQSATSELPQ) are disordered. Coiled coils occupy residues 724–800 (DNNE…KSTS) and 828–852 (KKMQ…EAAK). The segment at 858–889 (SGRGRGIHTRGRGTAHGRGRGRGRGRGVPGHA) is disordered. The segment covering 862–882 (RGIHTRGRGTAHGRGRGRGRG) has biased composition (basic residues). The 70-residue stretch at 896 to 965 (RALEISAFTE…QDLKLAWNKP (70 aa)) folds into the RRM 2 domain. Residues 970-1012 (SAVDTEEAEPDEEEFQEESLVDDSLLQDDDEEEEDNESRSWRR) form a disordered region. Acidic residues predominate over residues 973–1005 (DTEEAEPDEEEFQEESLVDDSLLQDDDEEEEDN).

In terms of tissue distribution, expressed in testis and ovary.

In terms of biological role, may be involved in the turnover of nuclear polyadenylated (pA+) RNA. The sequence is that of RNA-binding protein 26 from Mus musculus (Mouse).